A 324-amino-acid chain; its full sequence is Protoheme IX farnesyltransferase 2 (324 aa).

Helical transmembrane passes span 39–59, 63–83, 115–135, 137–157, 166–186, 192–212, 239–259, 260–280, and 302–322; these read LIKP…MLLA, IPSP…AGSA, HALV…WATT, LLSA…YTLV, IVWG…GVTG, ALVM…SLAM, IVVF…ATGW, LYTA…HRLH, and LMIV…VLGW.

The protein belongs to the UbiA prenyltransferase family. Protoheme IX farnesyltransferase subfamily.

The protein resides in the cell membrane. It catalyses the reaction heme b + (2E,6E)-farnesyl diphosphate + H2O = Fe(II)-heme o + diphosphate. The protein operates within porphyrin-containing compound metabolism; heme O biosynthesis; heme O from protoheme: step 1/1. Functionally, converts heme B (protoheme IX) to heme O by substitution of the vinyl group on carbon 2 of heme B porphyrin ring with a hydroxyethyl farnesyl side group. The protein is Protoheme IX farnesyltransferase 2 of Saccharopolyspora erythraea (strain ATCC 11635 / DSM 40517 / JCM 4748 / NBRC 13426 / NCIMB 8594 / NRRL 2338).